The chain runs to 477 residues: MKHAIRHIHFVGLGGAGMSGIAEVLFNLGYRISGSDLVDSATLRRLQGLGIGTCLGHAGAHIEGADAVVTSTAVTADNPEVLAARAKKIPVVPRALMLAELMRLKQGIAIAGTHGKTTTTSLVTSVLAEAGLDPTFVIGGRLNSVGAHAKLGSGDYIVVEADESDASFLNLLPVMAVVTNIDADHMETYGHDFGRLKGAFVDFLHRMPFYGTAILCVDSPAVRDIMPGVTCPITSYGLSEDAQVRAVDLRADGARMHFTVQRSNGVTLPDLAVQLNLAGAHNVLNALSAIAVAVELNIPDAAVLRALAGFKGVGRRFQSYGQLPAKDGGQFSVIDDYGHHPVEMAATLAAARGAFPGRRLVLAFQPHRYSRTRDCFEDFVRVMGSADAVLLTEVYAAGEAPVVAADGRSLARALRVAGRVEPVFVADVADLPQAIAENARDGDLLLCMGAGSIGAVPGKLLEMLRNDEHTAMQRTAP.

Residue 112-118 (GTHGKTT) coordinates ATP.

The protein belongs to the MurCDEF family.

Its subcellular location is the cytoplasm. It carries out the reaction UDP-N-acetyl-alpha-D-muramate + L-alanine + ATP = UDP-N-acetyl-alpha-D-muramoyl-L-alanine + ADP + phosphate + H(+). It participates in cell wall biogenesis; peptidoglycan biosynthesis. Functionally, cell wall formation. This chain is UDP-N-acetylmuramate--L-alanine ligase, found in Verminephrobacter eiseniae (strain EF01-2).